The chain runs to 416 residues: Phakinin (416 aa).

Residues 1–48 form a disordered region; it reads MSERRVAMDLPSGSNASMPLQRHRVSSLRGTRSPSSLDSPPASRTSAV. At Ser-2 the chain carries N-acetylserine. Residues 2 to 115 form a head region; it reads SERRVAMDLP…HATAEDLGGC (114 aa). Ser-27, Ser-33, Ser-36, and Ser-91 each carry phosphoserine. The segment covering 28-48 has biased composition (polar residues); it reads LRGTRSPSSLDSPPASRTSAV. In terms of domain architecture, IF rod spans 105-416; that stretch reads NHATAEDLGG…HALLDREESN (312 aa). Coiled-coil stretches lie at residues 199 to 240 and 314 to 391; these read FRKA…SLSR and LAAA…ERAH. The tract at residues 397–416 is tail; the sequence is GQLQKDVASYHALLDREESN.

This sequence belongs to the intermediate filament family. As to quaternary structure, part of a complex required for lens intermediate filament formation composed of BFSP1, BFSP2, and CRYAA. Found in a complex composed of PPL (via C-terminal linker domain), BFSP1 and BFSP2 in the retinal lens. Within the complex interacts with PPL (via C-terminal linker domain) and with BFSP1. Identified in a complex that contains VIM, EZR, AHNAK, BFSP1, BFSP2, ANK2, PLEC, PRX and spectrin. Interacts with LGSN. Interacts with VIM. Expressed in the deep and shallow cortices of the retina lens (at protein level).

It is found in the cell membrane. It localises to the cytoplasm. The protein localises to the cytoskeleton. Its subcellular location is the cell cortex. In terms of biological role, required for the correct formation of lens intermediate filaments as part of a complex composed of BFSP1, BFSP2 and CRYAA. Plays a role in maintenance of retinal lens optical clarity. The protein is Phakinin of Rattus norvegicus (Rat).